Consider the following 599-residue polypeptide: Elongation factor 4 (599 aa).

The region spanning 2-184 (KNIRNFSIIA…RLVRDIPPPE (183 aa)) is the tr-type G domain. GTP contacts are provided by residues 14 to 19 (DHGKST) and 131 to 134 (NKID).

Belongs to the TRAFAC class translation factor GTPase superfamily. Classic translation factor GTPase family. LepA subfamily.

The protein resides in the cell inner membrane. The catalysed reaction is GTP + H2O = GDP + phosphate + H(+). Required for accurate and efficient protein synthesis under certain stress conditions. May act as a fidelity factor of the translation reaction, by catalyzing a one-codon backward translocation of tRNAs on improperly translocated ribosomes. Back-translocation proceeds from a post-translocation (POST) complex to a pre-translocation (PRE) complex, thus giving elongation factor G a second chance to translocate the tRNAs correctly. Binds to ribosomes in a GTP-dependent manner. This chain is Elongation factor 4, found in Klebsiella pneumoniae subsp. pneumoniae (strain ATCC 700721 / MGH 78578).